The chain runs to 65 residues: Large ribosomal subunit protein uL30 (65 aa).

It belongs to the universal ribosomal protein uL30 family. In terms of assembly, part of the 50S ribosomal subunit.

The chain is Large ribosomal subunit protein uL30 from Brucella suis (strain ATCC 23445 / NCTC 10510).